A 50-amino-acid polypeptide reads, in one-letter code: Protease inhibitor 2 (50 aa).

A Kazal-like domain is found at 2–50; the sequence is EDCVGRKACTREWYPVCGSDGVTYSNPCNFSAQQEQCDPNITIAHMGEC. 2 disulfides stabilise this stretch: C10–C29 and C18–C50. N30 and N41 each carry an N-linked (GlcNAc...) asparagine glycan.

Functionally, serine protease inhibitor. Strongly inhibits human neutrophil elastase and trypsin, also inhibits porcine pancreatic elastase and subtilisin A. Does not inhibit chymotrypsin, plasma kallikrein, pancreatic kallikrein, thrombin or papain. The polypeptide is Protease inhibitor 2 (Cenchritis muricatus (Beaded periwinkle)).